The sequence spans 141 residues: Large ribosomal subunit protein uL11 (141 aa).

Belongs to the universal ribosomal protein uL11 family. As to quaternary structure, part of the ribosomal stalk of the 50S ribosomal subunit. Interacts with L10 and the large rRNA to form the base of the stalk. L10 forms an elongated spine to which L12 dimers bind in a sequential fashion forming a multimeric L10(L12)X complex. Post-translationally, one or more lysine residues are methylated.

Functionally, forms part of the ribosomal stalk which helps the ribosome interact with GTP-bound translation factors. This is Large ribosomal subunit protein uL11 from Prochlorococcus marinus (strain MIT 9515).